The chain runs to 193 residues: Achaete-scute homolog 2 (193 aa).

Disordered regions lie at residues 1-58 and 128-177; these read MDSR…RNER and PLPR…GALS. One can recognise a bHLH domain in the interval 50–102; sequence AAVARRNERERNRVKLVNLGFQALRQHVPHGGASKKLSKVETLRSAVEYIRAL. Residues 128-152 show a composition bias toward low complexity; that stretch reads PLPRAPSGTPATAASPSCASSSPGR.

As to quaternary structure, efficient DNA binding requires dimerization with another basic helix-loop-helix (bHLH) protein. Forms heterodimers with bHLH transcription factor TCF3. May not heterodimerise with bHLH protein HAND1. As to expression, expressed in placenta.

The protein resides in the nucleus. In terms of biological role, transcription factor. Binds to E-box motifs 5'-CANNTG-3' in the regulatory elements of target genes, probably as a heterodimer with another basic helix-loop-helix (bHLH) protein such as the transcription factor TCF3. May bind both open and closed chromatin, acting as a pioneer transcription factor to allow other factors to bind and activate lineage-specific genes. Required during post-implantation development for the generation of some differentiated trophoblast cell types. Transcriptional activity of ASCL2 may be antagonised in a subset of trophoblast cells by bHLH transcription factor HAND1, perhaps by competing for dimerization with other bHLH proteins. Involved in differentiation and function of follicular T-helper (Tfh) cells, thereby playing a role in germinal center responses; probably modulates expression of genes involved in Tfh cell function, such as BCL6. May also act as a suppressor of Th1-, Th2- and Th17-cell differentiation. Induces the formation of stem cells in intestinal crypts in vitro, synergistically activating transcription of target genes, such as SOX9, together with TCF4/beta-catenin. May form a bistable transcriptional switch, controlling expression of its own gene together with Wnt/R-spondin signaling, and thereby maintaining stem cell characteristics. Modulates expression of target genes, including perhaps down-regulating EGR1/Krox24 and chemokine CXCL10/Mob-1 and up-regulating CXCR4 and CDKN1C/p57kip2, in Schwann cells. May play a role in reducing proliferation of Schwann cells, perhaps acting via modulation of expression of CDKN1C. May be dispensable for blastocyst formation and later embryonic function. May be involved in the determination of neuronal precursors. The protein is Achaete-scute homolog 2 (ASCL2) of Bos taurus (Bovine).